Consider the following 134-residue polypeptide: Orexigenic neuropeptide QRFP (134 aa).

The N-terminal stretch at 1-18 (MRSPYSLPYLLFLPLGAC) is a signal peptide. Positions 19 to 88 (FPVLDTEEPV…RAGFQLRLGR (70 aa)) are excised as a propeptide. Phe-131 is modified (phenylalanine amide).

It belongs to the RFamide neuropeptide family. In terms of assembly, ligand for the G-protein coupled receptor QRFPR/GPR103. Expressed in the hypothalamus.

The protein resides in the secreted. Its function is as follows. Stimulates feeding behavior, metabolic rate and locomotor activity and increases blood pressure. May have orexigenic activity. May promote aldosterone secretion by the adrenal gland. The protein is Orexigenic neuropeptide QRFP of Bos taurus (Bovine).